The chain runs to 697 residues: Envelope glycoprotein G (697 aa).

Residues 1–22 (MHAIAPRLLLLFVLSGLPGTRG) form the signal peptide. The Virion surface portion of the chain corresponds to 23-648 (GSGVPGPINP…WFLTASPALD (626 aa)). N-linked (GlcNAc...) asparagine; by host glycosylation is found at asparagine 104 and asparagine 163. Disordered stretches follow at residues 298-389 (HWAP…TTPP) and 402-630 (TPEE…PSGP). Basic and acidic residues predominate over residues 322 to 335 (LRTDPEGVDPDVRA). Low complexity-rich tracts occupy residues 375-389 (DPSA…TTPP) and 402-445 (TPEE…AKTP). N-linked (GlcNAc...) asparagine; by host glycosylation occurs at asparagine 435. 2 stretches are compositionally biased toward pro residues: residues 446–457 (PTTPAPTTPPPT) and 465–480 (PTTP…PATP). Residues 481 to 529 (GPVGASAAPTADSPLTALPPATAPGPSAANVSVAATTATPGTRGTARTP) are compositionally biased toward low complexity. N-linked (GlcNAc...) asparagine; by host glycosylation occurs at asparagine 510. Residues 542 to 552 (DAPPGSPAPPP) are compositionally biased toward pro residues. Residues 560–576 (EEFEGAGDGEPPEDDDS) are compositionally biased toward acidic residues. Residues 587–603 (PNKPPPARPGPIRPTLP) are compositionally biased toward pro residues. A helical membrane pass occupies residues 649 to 669 (ILFIISTTIHTAAFVCLVALA). Topologically, residues 670–697 (AQLWRGRAGRRRYAHPSVRYVCLPPERD) are intravirion.

Belongs to the alphaherpesvirinae glycoprotein G family.

Its subcellular location is the virion membrane. Functionally, chemokine-binding protein that inhibits neutrophils' chemotaxis. This Homo sapiens (Human) protein is Envelope glycoprotein G (gG).